Reading from the N-terminus, the 461-residue chain is Zinc transporter 6 (461 aa).

Over 1-33 (MGTIHLFRKPQRSFFGKLLREFRLVAADRRSWK) the chain is Cytoplasmic. A helical membrane pass occupies residues 34–54 (ILLFGVINLICTGFLLMWCSS). Over 55 to 64 (TNSIALTAYT) the chain is Extracellular. The helical transmembrane segment at 65–85 (YLTIFDLFSLMTCLISYWVTL) threads the bilayer. At 86-98 (RKPSPVYSFGFER) the chain is on the cytoplasmic side. A helical membrane pass occupies residues 99–119 (LEVLAVFASTVLAQLGALFIL). The Extracellular segment spans residues 120 to 134 (KESAERFLEQPEIHT). Residues 135–155 (GRLLVGTFVALCFNLFTMLSI) traverse the membrane as a helical segment. Residues 156–200 (RNKPFAYVSEAASTSWLQEHVADLSRSLCGIIPGLSSIFLPRMNP) are Cytoplasmic-facing. The chain crosses the membrane as a helical span at residues 201–221 (FVLIDLAGAFALCITYMLIEI). At 222–223 (NN) the chain is on the extracellular side. The chain crosses the membrane as a helical span at residues 224–244 (YFAVDTASAIAIALMTFGTMY). Residues 245–461 (PMSVYSGKVL…TNNRIGQPRP (217 aa)) lie on the Cytoplasmic side of the membrane. The interval 371–392 (NPVTSTPAKPSSPPPEFSFNTP) is disordered.

This sequence belongs to the cation diffusion facilitator (CDF) transporter (TC 2.A.4) family. SLC30A subfamily. As to quaternary structure, heterodimer with SLC30A5; form a functional zinc ion transmembrane transporter. Expressed in brain; especially in cerebellum, hippocampus, parahippocampal gyrus, superior and middle temporal gyrus. Also expressed in B-cells, colon, eye, and lung. Lower expression was present in bone, brain, cervix, ear, heart, kidney, muscle, nerve, pancreas, prostate, skin, stomach, and testis.

Its subcellular location is the golgi apparatus. The protein resides in the trans-Golgi network membrane. Has probably no intrinsic transporter activity but together with SLC30A5 forms a functional zinc ion:proton antiporter heterodimer, mediating zinc entry into the lumen of organelles along the secretory pathway. As part of that zinc ion:proton antiporter, contributes to zinc ion homeostasis within the early secretory pathway and regulates the activation and folding of enzymes like alkaline phosphatases and enzymes involved in phosphatidylinositol glycan anchor biosynthesis. The sequence is that of Zinc transporter 6 from Homo sapiens (Human).